A 504-amino-acid chain; its full sequence is Arabinose import ATP-binding protein AraG (504 aa).

2 ABC transporter domains span residues 8-243 (LSFR…MVGR) and 256-499 (YGEE…MPKV). 40 to 47 (GENGAGKS) contributes to the ATP binding site.

The protein belongs to the ABC transporter superfamily. Arabinose importer (TC 3.A.1.2.2) family. As to quaternary structure, the complex is composed of two ATP-binding proteins (AraG), two transmembrane proteins (AraH) and a solute-binding protein (AraF).

It is found in the cell inner membrane. The enzyme catalyses L-arabinose(out) + ATP + H2O = L-arabinose(in) + ADP + phosphate + H(+). In terms of biological role, part of the ABC transporter complex AraFGH involved in arabinose import. Responsible for energy coupling to the transport system. The sequence is that of Arabinose import ATP-binding protein AraG from Shigella flexneri.